The primary structure comprises 523 residues: Probable malate:quinone oxidoreductase 1 (523 aa).

Belongs to the MQO family. The cofactor is FAD.

It carries out the reaction (S)-malate + a quinone = a quinol + oxaloacetate. Its pathway is carbohydrate metabolism; tricarboxylic acid cycle; oxaloacetate from (S)-malate (quinone route): step 1/1. The protein is Probable malate:quinone oxidoreductase 1 of Pseudomonas aeruginosa (strain ATCC 15692 / DSM 22644 / CIP 104116 / JCM 14847 / LMG 12228 / 1C / PRS 101 / PAO1).